Reading from the N-terminus, the 389-residue chain is Carbamoyl phosphate synthase small chain (389 aa).

The CPSase stretch occupies residues 1 to 197 (MMSSPAKAAK…AAKDASIGDD (197 aa)). The L-glutamine site is built by S51, G249, and G251. A Glutamine amidotransferase type-1 domain is found at 201–387 (HVVCMDFGMK…QEQLNEKCGV (187 aa)). Residue C276 is the Nucleophile of the active site. Positions 277, 280, 318, 320, and 321 each coordinate L-glutamine. Catalysis depends on residues H360 and E362.

The protein belongs to the CarA family. In terms of assembly, composed of two chains; the small (or glutamine) chain promotes the hydrolysis of glutamine to ammonia, which is used by the large (or ammonia) chain to synthesize carbamoyl phosphate. Tetramer of heterodimers (alpha,beta)4.

The enzyme catalyses hydrogencarbonate + L-glutamine + 2 ATP + H2O = carbamoyl phosphate + L-glutamate + 2 ADP + phosphate + 2 H(+). The catalysed reaction is L-glutamine + H2O = L-glutamate + NH4(+). It functions in the pathway amino-acid biosynthesis; L-arginine biosynthesis; carbamoyl phosphate from bicarbonate: step 1/1. Its pathway is pyrimidine metabolism; UMP biosynthesis via de novo pathway; (S)-dihydroorotate from bicarbonate: step 1/3. In terms of biological role, small subunit of the glutamine-dependent carbamoyl phosphate synthetase (CPSase). CPSase catalyzes the formation of carbamoyl phosphate from the ammonia moiety of glutamine, carbonate, and phosphate donated by ATP, constituting the first step of 2 biosynthetic pathways, one leading to arginine and/or urea and the other to pyrimidine nucleotides. The small subunit (glutamine amidotransferase) binds and cleaves glutamine to supply the large subunit with the substrate ammonia. The protein is Carbamoyl phosphate synthase small chain of Rhodopirellula baltica (strain DSM 10527 / NCIMB 13988 / SH1).